Reading from the N-terminus, the 202-residue chain is Tumor necrosis factor alpha-induced protein 8-like protein 3 (202 aa).

Residues 1–10 (MDTDSGDLSE) show a composition bias toward acidic residues. Residues 1–24 (MDTDSGDLSEGELSPGPEQFSSKS) form a disordered region.

This sequence belongs to the TNFAIP8 family.

It is found in the cytoplasm. It localises to the cell membrane. May act as a lipid transfer protein. The protein is Tumor necrosis factor alpha-induced protein 8-like protein 3 (tnfaip8l3) of Xenopus laevis (African clawed frog).